Reading from the N-terminus, the 494-residue chain is Glutamyl-tRNA(Gln) amidotransferase subunit A (494 aa).

Catalysis depends on charge relay system residues Lys-81 and Ser-156. Ser-180 functions as the Acyl-ester intermediate in the catalytic mechanism.

This sequence belongs to the amidase family. GatA subfamily. In terms of assembly, heterotrimer of A, B and C subunits.

It catalyses the reaction L-glutamyl-tRNA(Gln) + L-glutamine + ATP + H2O = L-glutaminyl-tRNA(Gln) + L-glutamate + ADP + phosphate + H(+). In terms of biological role, allows the formation of correctly charged Gln-tRNA(Gln) through the transamidation of misacylated Glu-tRNA(Gln) in organisms which lack glutaminyl-tRNA synthetase. The reaction takes place in the presence of glutamine and ATP through an activated gamma-phospho-Glu-tRNA(Gln). This Mycobacterium tuberculosis (strain ATCC 25177 / H37Ra) protein is Glutamyl-tRNA(Gln) amidotransferase subunit A.